Here is a 375-residue protein sequence, read N- to C-terminus: 4,4'-diaponeurosporenoate glycosyltransferase (375 aa).

4 helical membrane-spanning segments follow: residues 3–23 (WLSR…ALIF), 164–184 (FYEG…NVFS), 277–297 (IMAA…GLCL), and 330–350 (FSNL…KIFI).

The protein belongs to the glycosyltransferase 2 family. CrtQ subfamily.

The protein localises to the cell membrane. It functions in the pathway carotenoid biosynthesis; staphyloxanthin biosynthesis; staphyloxanthin from farnesyl diphosphate: step 4/5. In terms of biological role, catalyzes the glycosylation of 4,4'-diaponeurosporenoate, i.e. the esterification of glucose at the C1'' position with the carboxyl group of 4,4'-diaponeurosporenic acid, to form glycosyl-4,4'-diaponeurosporenoate. This is a step in the biosynthesis of staphyloxanthin, an orange pigment present in most staphylococci strains. This chain is 4,4'-diaponeurosporenoate glycosyltransferase (crtQ), found in Staphylococcus aureus (strain bovine RF122 / ET3-1).